The following is a 609-amino-acid chain: Heat shock factor protein (609 aa).

Residues methionine 1–asparagine 33 show a composition bias toward polar residues. The interval methionine 1–asparagine 47 is disordered. Positions serine 34 to serine 45 are enriched in low complexity. The DNA-binding element occupies isoleucine 50–alanine 156. 4 disordered regions span residues proline 255–arginine 298, serine 310–lysine 371, asparagine 411–glutamine 445, and serine 567–alanine 609. Polar residues-rich tracts occupy residues valine 257–asparagine 277, aspartate 339–proline 360, tyrosine 422–proline 443, and serine 567–arginine 597. Serine 350 is subject to Phosphoserine. Positions glutamine 598–alanine 609 are enriched in basic residues.

It belongs to the HSF family. As to quaternary structure, homotrimer.

The protein localises to the nucleus. Functionally, DNA-binding protein that specifically binds heat shock promoter elements (HSE) and activates transcription. Also required for growth at normal temperatures. This chain is Heat shock factor protein (hsf1), found in Schizosaccharomyces pombe (strain 972 / ATCC 24843) (Fission yeast).